The sequence spans 260 residues: tRNA pseudouridine synthase C (260 aa).

The active site involves Asp-54.

Belongs to the pseudouridine synthase RluA family.

The catalysed reaction is uridine(65) in tRNA = pseudouridine(65) in tRNA. Functionally, responsible for synthesis of pseudouridine from uracil-65 in transfer RNAs. This Salmonella typhi protein is tRNA pseudouridine synthase C (truC).